We begin with the raw amino-acid sequence, 287 residues long: Gliotoxin thiomethyltransferase GtmA (287 aa).

S-adenosyl-L-methionine contacts are provided by threonine 27 and alanine 54. Cysteine 55 and cysteine 80 form a disulfide bridge. S-adenosyl-L-methionine is bound by residues aspartate 82, methionine 87, asparagine 109, alanine 110, alanine 126, and arginine 248.

The protein belongs to the class I-like SAM-binding methyltransferase superfamily.

It is found in the cytoplasm. It catalyses the reaction a thiol + S-adenosyl-L-methionine = a methyl thioether + S-adenosyl-L-homocysteine + H(+). S-methyltransferase that catalyzes the irreversible conversion of the secondary metabolite gliotoxin to bis(methylthio)gliotoxin (BmGT). Gliotoxin, a member of the epipolythiodioxopiperazine (ETP) class of toxins, is characterized by a disulfide bridged cyclic dipeptide. Its thiol groups are essential for bioactivity, as they conjugate to sulfur-containing proteins, disturb the intracellular redox equilibrium, and generate reactive oxygen species by cycling between reduced and oxidized states. The enzyme prevents self-intoxication of the fungus by irreversible conversion of the toxic gliotoxin to a biologically inactive bis-thiomethylated derivative. Appears to negatively regulate gliotoxin biosynthesis. The sequence is that of Gliotoxin thiomethyltransferase GtmA from Aspergillus fumigatus (strain ATCC MYA-4609 / CBS 101355 / FGSC A1100 / Af293) (Neosartorya fumigata).